We begin with the raw amino-acid sequence, 228 residues long: General odorant-binding protein 71 (228 aa).

Residues Met1–Gly20 form the signal peptide. A disordered region spans residues Thr50 to Thr131. Over residues Gly55–Arg72 the composition is skewed to basic and acidic residues. Residues Gly83–Ser99 are compositionally biased toward low complexity. Positions Ala111–Ser120 are enriched in gly residues. Over residues Gly121–Thr131 the composition is skewed to low complexity. 2 disulfide bridges follow: Cys138/Cys199 and Cys185/Cys208.

The protein belongs to the PBP/GOBP family.

The protein localises to the secreted. Its function is as follows. Present in the aqueous fluid surrounding olfactory sensory dendrites and are thought to aid in the capture and transport of hydrophobic odorants into and through this fluid. The sequence is that of General odorant-binding protein 71 (Obp71) from Anopheles gambiae (African malaria mosquito).